A 617-amino-acid chain; its full sequence is DNA mismatch repair protein MutL (617 aa).

Residues 363-394 (YAPAYGARPPQPSAWSVDTSPHRPLDDGQNRF) are disordered. A compositionally biased stretch (basic and acidic residues) spans 382–392 (SPHRPLDDGQN).

It belongs to the DNA mismatch repair MutL/HexB family.

This protein is involved in the repair of mismatches in DNA. It is required for dam-dependent methyl-directed DNA mismatch repair. May act as a 'molecular matchmaker', a protein that promotes the formation of a stable complex between two or more DNA-binding proteins in an ATP-dependent manner without itself being part of a final effector complex. This Allorhizobium ampelinum (strain ATCC BAA-846 / DSM 112012 / S4) (Agrobacterium vitis (strain S4)) protein is DNA mismatch repair protein MutL.